We begin with the raw amino-acid sequence, 226 residues long: Leucyl/phenylalanyl-tRNA--protein transferase (226 aa).

It belongs to the L/F-transferase family.

The protein resides in the cytoplasm. The catalysed reaction is N-terminal L-lysyl-[protein] + L-leucyl-tRNA(Leu) = N-terminal L-leucyl-L-lysyl-[protein] + tRNA(Leu) + H(+). The enzyme catalyses N-terminal L-arginyl-[protein] + L-leucyl-tRNA(Leu) = N-terminal L-leucyl-L-arginyl-[protein] + tRNA(Leu) + H(+). It carries out the reaction L-phenylalanyl-tRNA(Phe) + an N-terminal L-alpha-aminoacyl-[protein] = an N-terminal L-phenylalanyl-L-alpha-aminoacyl-[protein] + tRNA(Phe). Functions in the N-end rule pathway of protein degradation where it conjugates Leu, Phe and, less efficiently, Met from aminoacyl-tRNAs to the N-termini of proteins containing an N-terminal arginine or lysine. This is Leucyl/phenylalanyl-tRNA--protein transferase from Pseudomonas paraeruginosa (strain DSM 24068 / PA7) (Pseudomonas aeruginosa (strain PA7)).